The chain runs to 198 residues: Large ribosomal subunit protein bL25 (198 aa).

This sequence belongs to the bacterial ribosomal protein bL25 family. CTC subfamily. In terms of assembly, part of the 50S ribosomal subunit; part of the 5S rRNA/L5/L18/L25 subcomplex. Contacts the 5S rRNA. Binds to the 5S rRNA independently of L5 and L18.

This is one of the proteins that binds to the 5S RNA in the ribosome where it forms part of the central protuberance. This Chlorobium phaeobacteroides (strain DSM 266 / SMG 266 / 2430) protein is Large ribosomal subunit protein bL25.